We begin with the raw amino-acid sequence, 42 residues long: Potassium channel toxin gamma-KTx 1.2 (42 aa).

Intrachain disulfides connect cysteine 5–cysteine 23, cysteine 11–cysteine 34, cysteine 20–cysteine 39, and cysteine 24–cysteine 41.

The protein belongs to the ergtoxin family. Gamma-KTx 1 subfamily. Expressed by the venom gland.

The protein localises to the secreted. Blocks Kv11/ERG potassium channels. The protein is Potassium channel toxin gamma-KTx 1.2 of Centruroides elegans (Bark scorpion).